Consider the following 301-residue polypeptide: Ribonuclease H2 subunit A (301 aa).

At methionine 1 the chain carries N-acetylmethionine. Residues 28–251 (PCVLGVDEAG…AQAILEKEAE (224 aa)) form the RNase H type-2 domain. 3 residues coordinate a divalent metal cation: aspartate 34, glutamate 35, and aspartate 142. Threonine 217 carries the phosphothreonine modification. Residues 255-264 (WEDSEAEEDP) show a composition bias toward acidic residues. The tract at residues 255–284 (WEDSEAEEDPERPGKITSYFSQGPQTCRPQ) is disordered. Serine 258 bears the Phosphoserine mark. The span at 272 to 282 (SYFSQGPQTCR) shows a compositional bias: polar residues.

The protein belongs to the RNase HII family. Eukaryotic subfamily. In terms of assembly, the RNase H2 complex is a heterotrimer composed of the catalytic subunit RNASEH2A and the non-catalytic subunits RNASEH2B and RNASEH2C. The cofactor is Mn(2+). Mg(2+) is required as a cofactor.

Its subcellular location is the nucleus. The enzyme catalyses Endonucleolytic cleavage to 5'-phosphomonoester.. Functionally, catalytic subunit of RNase HII, an endonuclease that specifically degrades the RNA of RNA:DNA hybrids. Participates in DNA replication, possibly by mediating the removal of lagging-strand Okazaki fragment RNA primers during DNA replication. Mediates the excision of single ribonucleotides from DNA:RNA duplexes. This chain is Ribonuclease H2 subunit A (Rnaseh2a), found in Mus musculus (Mouse).